A 421-amino-acid chain; its full sequence is Testin (421 aa).

Residues 92 to 199 enclose the PET domain; it reads MILTNPVAAK…GDVKLPREMD (108 aa). The segment at 133-164 is disordered; it reads EKQPVAGSEGAQYRKKQLAKQLPAHDQDPSKC. Over residues 155 to 164 the composition is skewed to basic and acidic residues; that stretch reads PAHDQDPSKC. 3 consecutive LIM zinc-binding domains span residues 234–297, 299–359, and 362–421; these read YSCY…CDSE, PRCA…NHAV, and QGCH…KMMS.

This sequence belongs to the prickle / espinas / testin family. As to quaternary structure, interacts via LIM domain 1 with ZYX. Interacts (via LIM domain 3) with ENAH and VASP. Interacts with ALKBH4, talin, actin, alpha-actinin, GRIP1 and PXN. Interacts (via LIM domain 2) with ACTL7A (via N-terminus). Heterodimer with ACTL7A; the heterodimer interacts with ENAH to form a heterotrimer.

Its subcellular location is the cytoplasm. It localises to the cell junction. The protein localises to the focal adhesion. In terms of biological role, scaffold protein that may play a role in cell adhesion, cell spreading and in the reorganization of the actin cytoskeleton. Plays a role in the regulation of cell proliferation. May act as a tumor suppressor. The polypeptide is Testin (TES) (Neofelis nebulosa (Clouded leopard)).